A 202-amino-acid chain; its full sequence is ATP-dependent Clp protease proteolytic subunit (202 aa).

The Nucleophile role is filled by S101. The active site involves H126.

Belongs to the peptidase S14 family. As to quaternary structure, component of the chloroplastic Clp protease core complex.

The protein localises to the plastid. The protein resides in the chloroplast stroma. The catalysed reaction is Hydrolysis of proteins to small peptides in the presence of ATP and magnesium. alpha-casein is the usual test substrate. In the absence of ATP, only oligopeptides shorter than five residues are hydrolyzed (such as succinyl-Leu-Tyr-|-NHMec, and Leu-Tyr-Leu-|-Tyr-Trp, in which cleavage of the -Tyr-|-Leu- and -Tyr-|-Trp bonds also occurs).. In terms of biological role, cleaves peptides in various proteins in a process that requires ATP hydrolysis. Has a chymotrypsin-like activity. Plays a major role in the degradation of misfolded proteins. In Liriodendron tulipifera (Tuliptree), this protein is ATP-dependent Clp protease proteolytic subunit.